A 205-amino-acid polypeptide reads, in one-letter code: Proteasome subunit beta type-3 (205 aa).

A Phosphoserine modification is found at serine 31. A Glycyl lysine isopeptide (Lys-Gly) (interchain with G-Cter in ubiquitin) cross-link involves residue lysine 70.

Belongs to the peptidase T1B family. The 26S proteasome consists of a 20S proteasome core and two 19S regulatory subunits. The 20S proteasome core is composed of 28 subunits that are arranged in four stacked rings, resulting in a barrel-shaped structure. The two end rings are each formed by seven alpha subunits, and the two central rings are each formed by seven beta subunits. The catalytic chamber with the active sites is on the inside of the barrel.

Its subcellular location is the cytoplasm. It localises to the nucleus. Its function is as follows. Non-catalytic component of the proteasome which degrades poly-ubiquitinated proteins in the cytoplasm and in the nucleus. It is essential for the regulated turnover of proteins and for the removal of misfolded proteins. The proteasome is a multicatalytic proteinase complex that is characterized by its ability to cleave peptides with Arg, Phe, Tyr, Leu, and Glu adjacent to the leaving group at neutral or slightly basic pH. It has an ATP-dependent proteolytic activity. This subunit may participate in the trypsin-like activity of the enzyme complex. This chain is Proteasome subunit beta type-3 (PUP3), found in Saccharomyces cerevisiae (strain ATCC 204508 / S288c) (Baker's yeast).